Consider the following 230-residue polypeptide: MAIGKRLNKAREGVDREKLYPLAEAIKMVKERAKAKFDETIEVAINLGVDPRHADQMVRGVVTLPNGTGRTLRVGVFARGAKADEAKAAGADVVGAEDLVEKVQNGSIDFDRCIATPDMMPLVGRLGKVLGPRGLMPNPKIGTVTMDVTGAVKGAKGGSVEFRVEKAGILQAGVGKASFSEEKLVENIKALADAVSKAKPAGSKGTYIQRVAVSSTMGPGVKVEPGTILG.

This sequence belongs to the universal ribosomal protein uL1 family. In terms of assembly, part of the 50S ribosomal subunit.

Binds directly to 23S rRNA. The L1 stalk is quite mobile in the ribosome, and is involved in E site tRNA release. In terms of biological role, protein L1 is also a translational repressor protein, it controls the translation of the L11 operon by binding to its mRNA. The chain is Large ribosomal subunit protein uL1 from Bradyrhizobium diazoefficiens (strain JCM 10833 / BCRC 13528 / IAM 13628 / NBRC 14792 / USDA 110).